Here is a 231-residue protein sequence, read N- to C-terminus: 2,3-bisphosphoglycerate-dependent phosphoglycerate mutase (231 aa).

Residues 10–17, 23–24, R62, 89–92, K100, 116–117, and 185–186 each bind substrate; these read RHGQSEWN, TG, ERHY, RR, and GN. H11 (tele-phosphohistidine intermediate) is an active-site residue. E89 acts as the Proton donor/acceptor in catalysis.

The protein belongs to the phosphoglycerate mutase family. BPG-dependent PGAM subfamily. Homodimer.

The enzyme catalyses (2R)-2-phosphoglycerate = (2R)-3-phosphoglycerate. It functions in the pathway carbohydrate degradation; glycolysis; pyruvate from D-glyceraldehyde 3-phosphate: step 3/5. Functionally, catalyzes the interconversion of 2-phosphoglycerate and 3-phosphoglycerate. This Buchnera aphidicola subsp. Acyrthosiphon pisum (strain APS) (Acyrthosiphon pisum symbiotic bacterium) protein is 2,3-bisphosphoglycerate-dependent phosphoglycerate mutase.